The chain runs to 572 residues: MTSRDQPRPKGPPKSTSPCPGISNSESSPTLNYQGILNRLKQFPRFSPHFAAELESIYYSLHKIQQDVAEHHKQIGNVLQIVESCSQLQGFQSEEVSPAEPASPGTPQQVKDKTLQESSFEDIMATRSSDWLRRPLGEDNQPETQLFWDKEPWFWHDTLTEQLWRIFAGVHDEKAKPRDRQQAPGLGQESKAPGSCDPGTDPCPEDASTPRPPEASSSPPEGSQDRNTSWGVVQEPPGRASRFLQSISWDPEDFEDAWKRPDALPGQSKRLAVPCKLEKMRILAHGELVLATAISSFTRHVFTCGRRGIKVWSLTGQVAEDRFPESHLPIQTPGAFLRTCLLSSNSRSLLTGGYNLASVSVWDLAAPSLHVKEQLPCAGLNCQALDANLDANLAFASFTSGVVRIWDLRDQSVVRDLKGYPDGVKSIVVKGYNIWTGGPDACLRCWDQRTIMKPLEYQFKSQIMSLSHSPQEDWVLLGMANGQQWLQSTSGSQRHMVGQKDSVILSVKFSPFGQWWASVGMDDFLGVYSMPAGTKVFEVPEMSPVTCCDVSSNNRLVVTGSGEHASVYQITY.

Disordered stretches follow at residues 1–30, 92–121, and 174–236; these read MTSR…SSPT, QSEE…SSFE, and KAKP…VQEP. The span at 14–30 shows a compositional bias: polar residues; the sequence is KSTSPCPGISNSESSPT. WD repeat units lie at residues 284-322, 332-372, 377-416, 419-456, 458-497, 499-538, and 540-571; these read AHGE…AEDR, TPGA…LHVK, CAGL…VVRD, GYPD…KPLE, QFKS…RHMV, QKDS…KVFE, and PEMS…YQIT. Ser510 carries the phosphoserine; by PKA modification.

This sequence belongs to the WD repeat Groucho/TLE family. As to quaternary structure, homodimers. Component of the subcortical maternal complex (SCMC), at least composed of NLRP5, KHDC3, OOEP, and TLE6. Within the complex, interacts with NLRP5, KHDC3 and OOEP. The SCMC may facilitate translocation of its components between the nuclear and cytoplasmic compartments. As part of the SCMC interacts with the SCMC-associated protein ZBED3. As part of the SCMC interacts with the SCMC-associated protein NLRP4F. As part of the SCMC interacts with the SCMC-associated protein CFL1/Cofilin-1. Interacts with FOXG1/BF-1; the interaction inhibits TLE1 interaction with FOXG1/BF-1. Interacts with NFATC1. Interacts with PAX6. In terms of assembly, component of the subcortical maternal complex (SCMC), at least composed of NLRP5, KHDC3L, OOEP, and TLE6 isoform 1. Within the complex, interacts with NLRP5, KHDC3L and OOEP. The SCMC may facilitate translocation of its components between the nuclear and cytoplasmic compartments.

Its subcellular location is the cytoplasm. It is found in the nucleus. Its function is as follows. Component of the subcortical maternal complex (SCMC), a multiprotein complex that plays a key role in early embryonic development. The SCMC complex is a structural constituent of cytoplasmic lattices, which consist in fibrous structures found in the cytoplasm of oocytes and preimplantation embryos. They are required to store maternal proteins critical for embryonic development, such as proteins that control epigenetic reprogramming of the preimplantation embryo, and prevent their degradation or activation. Also required for spermatogenesis: regulates spermatogonia proliferation and cell cycle progression, potentially via regulation of cell cycle regulatory genes such as; CEBPB, CEBPA, CSF3, PCNA, and CDK4. Suppresses FOXG1/BF-1-mediated transcriptional repression by inhibiting interaction of the transcriptional corepressor TLE1 with FOXG1 which promotes cortical neuron differentiation. Acts as a transcriptional corepressor of NFATC1-mediated gene expression by contributing to PAX6-mediated repression. Functionally, component of the subcortical maternal complex (SCMC), a multiprotein complex that plays a key role in early embryonic development. The chain is Transducin-like enhancer protein 6 from Homo sapiens (Human).